An 89-amino-acid chain; its full sequence is MKTLLLTLVVVTIVCLDLGYTMQCKTCSFYTCPNSETCPDGKNICVKRSWTAVRGDGPKREIRRECAATCPPSKLGLTVFCCTTDNCNH.

A signal peptide spans 1–21 (MKTLLLTLVVVTIVCLDLGYT). 5 disulfide bridges follow: C24–C45, C27–C32, C38–C66, C70–C81, and C82–C87. Residues 54-56 (RGD) carry the Cell attachment site motif.

This sequence belongs to the three-finger toxin family. Ancestral subfamily. Orphan group V sub-subfamily. As to expression, expressed by the venom gland.

It localises to the secreted. Exhibits M2 muscarinic acetylcholine receptor (CHRM2)-blocking activity, but has a weak binding activity toward nicotinic AChR. Moreover, it inhibits collagen-induced platelet aggregation. The sequence is that of Gamma-bungarotoxin from Bungarus multicinctus (Many-banded krait).